Consider the following 474-residue polypeptide: tRNA-2-methylthio-N(6)-dimethylallyladenosine synthase (474 aa).

The MTTase N-terminal domain maps to 3 to 120 (KKLHIKTWGC…LPEMINSVRG (118 aa)). Residues cysteine 12, cysteine 49, cysteine 83, cysteine 157, cysteine 161, and cysteine 164 each coordinate [4Fe-4S] cluster. Residues 143 to 375 (RAEGPTAFVS…QERINQQAMA (233 aa)) form the Radical SAM core domain. The TRAM domain occupies 378–441 (RRMLGTTQRI…PNSLRGKVVR (64 aa)).

The protein belongs to the methylthiotransferase family. MiaB subfamily. In terms of assembly, monomer. Requires [4Fe-4S] cluster as cofactor.

The protein resides in the cytoplasm. It carries out the reaction N(6)-dimethylallyladenosine(37) in tRNA + (sulfur carrier)-SH + AH2 + 2 S-adenosyl-L-methionine = 2-methylsulfanyl-N(6)-dimethylallyladenosine(37) in tRNA + (sulfur carrier)-H + 5'-deoxyadenosine + L-methionine + A + S-adenosyl-L-homocysteine + 2 H(+). Functionally, catalyzes the methylthiolation of N6-(dimethylallyl)adenosine (i(6)A), leading to the formation of 2-methylthio-N6-(dimethylallyl)adenosine (ms(2)i(6)A) at position 37 in tRNAs that read codons beginning with uridine. This Shigella boydii serotype 4 (strain Sb227) protein is tRNA-2-methylthio-N(6)-dimethylallyladenosine synthase.